We begin with the raw amino-acid sequence, 172 residues long: ATP synthase subunit b, chloroplastic (172 aa).

A helical membrane pass occupies residues 15–37 (ILATNLINLSAVLGVLIFFGKGV).

This sequence belongs to the ATPase B chain family. In terms of assembly, F-type ATPases have 2 components, F(1) - the catalytic core - and F(0) - the membrane proton channel. F(1) has five subunits: alpha(3), beta(3), gamma(1), delta(1), epsilon(1). F(0) has four main subunits: a(1), b(1), b'(1) and c(10-14). The alpha and beta chains form an alternating ring which encloses part of the gamma chain. F(1) is attached to F(0) by a central stalk formed by the gamma and epsilon chains, while a peripheral stalk is formed by the delta, b and b' chains.

The protein resides in the plastid. Its subcellular location is the chloroplast thylakoid membrane. F(1)F(0) ATP synthase produces ATP from ADP in the presence of a proton or sodium gradient. F-type ATPases consist of two structural domains, F(1) containing the extramembraneous catalytic core and F(0) containing the membrane proton channel, linked together by a central stalk and a peripheral stalk. During catalysis, ATP synthesis in the catalytic domain of F(1) is coupled via a rotary mechanism of the central stalk subunits to proton translocation. In terms of biological role, component of the F(0) channel, it forms part of the peripheral stalk, linking F(1) to F(0). In Pisum sativum (Garden pea), this protein is ATP synthase subunit b, chloroplastic.